A 155-amino-acid polypeptide reads, in one-letter code: 6,7-dimethyl-8-ribityllumazine synthase (155 aa).

5-amino-6-(D-ribitylamino)uracil is bound by residues Phe-22, 56 to 58 (AFE), and 80 to 82 (AVI). 85–86 (ST) provides a ligand contact to (2S)-2-hydroxy-3-oxobutyl phosphate. Residue His-88 is the Proton donor of the active site. Phe-113 provides a ligand contact to 5-amino-6-(D-ribitylamino)uracil. (2S)-2-hydroxy-3-oxobutyl phosphate is bound at residue Arg-127.

Belongs to the DMRL synthase family.

It catalyses the reaction (2S)-2-hydroxy-3-oxobutyl phosphate + 5-amino-6-(D-ribitylamino)uracil = 6,7-dimethyl-8-(1-D-ribityl)lumazine + phosphate + 2 H2O + H(+). It participates in cofactor biosynthesis; riboflavin biosynthesis; riboflavin from 2-hydroxy-3-oxobutyl phosphate and 5-amino-6-(D-ribitylamino)uracil: step 1/2. Functionally, catalyzes the formation of 6,7-dimethyl-8-ribityllumazine by condensation of 5-amino-6-(D-ribitylamino)uracil with 3,4-dihydroxy-2-butanone 4-phosphate. This is the penultimate step in the biosynthesis of riboflavin. The sequence is that of 6,7-dimethyl-8-ribityllumazine synthase from Bifidobacterium longum subsp. infantis (strain ATCC 15697 / DSM 20088 / JCM 1222 / NCTC 11817 / S12).